The following is a 422-amino-acid chain: Tryptophan synthase beta chain (422 aa).

The residue at position 111 (lysine 111) is an N6-(pyridoxal phosphate)lysine.

This sequence belongs to the TrpB family. In terms of assembly, tetramer of two alpha and two beta chains. It depends on pyridoxal 5'-phosphate as a cofactor.

The enzyme catalyses (1S,2R)-1-C-(indol-3-yl)glycerol 3-phosphate + L-serine = D-glyceraldehyde 3-phosphate + L-tryptophan + H2O. It participates in amino-acid biosynthesis; L-tryptophan biosynthesis; L-tryptophan from chorismate: step 5/5. In terms of biological role, the beta subunit is responsible for the synthesis of L-tryptophan from indole and L-serine. In Pseudothermotoga lettingae (strain ATCC BAA-301 / DSM 14385 / NBRC 107922 / TMO) (Thermotoga lettingae), this protein is Tryptophan synthase beta chain.